A 324-amino-acid polypeptide reads, in one-letter code: 3'-5' exoribonuclease YhaM (324 aa).

One can recognise an HD domain in the interval 163-279; the sequence is HVVSMLELAK…LHYIDNLDAK (117 aa).

The protein belongs to the YhaM family.

Its function is as follows. Shows a 3'-5' exoribonuclease activity. This chain is 3'-5' exoribonuclease YhaM, found in Geobacillus sp. (strain WCH70).